Consider the following 626-residue polypeptide: Probable metalloendopeptidase G1-type (626 aa).

Position 42 (histidine 42) interacts with Zn(2+). Glutamate 45 is an active-site residue. Histidine 46 contributes to the Zn(2+) binding site.

Belongs to the peptidase M44 family. The cofactor is Zn(2+).

In terms of biological role, seems to be involved in viral proteins maturation by cleavage at Ala-Gly-|-Xaa motifs. The polypeptide is Probable metalloendopeptidase G1-type (Fowlpox virus (strain NVSL) (FPV)).